The sequence spans 204 residues: ATP-dependent Clp protease proteolytic subunit (204 aa).

Residue Ser-100 is the Nucleophile of the active site. His-125 is a catalytic residue.

Belongs to the peptidase S14 family. As to quaternary structure, fourteen ClpP subunits assemble into 2 heptameric rings which stack back to back to give a disk-like structure with a central cavity, resembling the structure of eukaryotic proteasomes.

Its subcellular location is the cytoplasm. The enzyme catalyses Hydrolysis of proteins to small peptides in the presence of ATP and magnesium. alpha-casein is the usual test substrate. In the absence of ATP, only oligopeptides shorter than five residues are hydrolyzed (such as succinyl-Leu-Tyr-|-NHMec, and Leu-Tyr-Leu-|-Tyr-Trp, in which cleavage of the -Tyr-|-Leu- and -Tyr-|-Trp bonds also occurs).. Functionally, cleaves peptides in various proteins in a process that requires ATP hydrolysis. Has a chymotrypsin-like activity. Plays a major role in the degradation of misfolded proteins. The protein is ATP-dependent Clp protease proteolytic subunit of Anaeromyxobacter sp. (strain Fw109-5).